A 340-amino-acid chain; its full sequence is UDP-3-O-acylglucosamine N-acyltransferase (340 aa).

H238 functions as the Proton acceptor in the catalytic mechanism.

Belongs to the transferase hexapeptide repeat family. LpxD subfamily. In terms of assembly, homotrimer.

It carries out the reaction a UDP-3-O-[(3R)-3-hydroxyacyl]-alpha-D-glucosamine + a (3R)-hydroxyacyl-[ACP] = a UDP-2-N,3-O-bis[(3R)-3-hydroxyacyl]-alpha-D-glucosamine + holo-[ACP] + H(+). The protein operates within bacterial outer membrane biogenesis; LPS lipid A biosynthesis. Catalyzes the N-acylation of UDP-3-O-acylglucosamine using 3-hydroxyacyl-ACP as the acyl donor. Is involved in the biosynthesis of lipid A, a phosphorylated glycolipid that anchors the lipopolysaccharide to the outer membrane of the cell. This Shewanella frigidimarina (strain NCIMB 400) protein is UDP-3-O-acylglucosamine N-acyltransferase.